Here is a 411-residue protein sequence, read N- to C-terminus: Protein translocase subunit SecY (411 aa).

The next 10 membrane-spanning stretches (helical) occupy residues 13–33 (FTLL…PGID), 52–72 (IFSG…VPYI), 111–131 (ALGW…PYVF), 135–155 (FTFV…IMWL), 163–180 (GIGN…VSGL), 197–217 (SIKF…TIFV), 252–272 (GVMP…LTQL), 291–311 (LYLV…TSIV), 350–370 (FLGA…EKVA), and 377–397 (GLGA…AKQI).

Belongs to the SecY/SEC61-alpha family. Component of the plastid Sec protein translocase complex, which is composed of at least SecY, SecE and SecG.

Its subcellular location is the plastid. It is found in the chloroplast thylakoid membrane. Its function is as follows. The central subunit of the protein translocation channel SecYE. Consists of two halves formed by TMs 1-5 and 6-10. These two domains form a lateral gate at the front which open onto the bilayer between TMs 2 and 7, and are clamped together by SecE at the back. The channel is closed by both a pore ring composed of hydrophobic SecY resides and a short helix (helix 2A) on the extracellular side of the membrane which forms a plug. This chain is Protein translocase subunit SecY, found in Porphyra purpurea (Red seaweed).